The primary structure comprises 149 residues: Small ribosomal subunit protein uS15 (149 aa).

Residues 1–11 (MARMHSRDRGK) show a composition bias toward basic and acidic residues. The tract at residues 1 to 25 (MARMHSRDRGKSGSTRPPRVAPPSW) is disordered.

Belongs to the universal ribosomal protein uS15 family. As to quaternary structure, part of the 30S ribosomal subunit.

The sequence is that of Small ribosomal subunit protein uS15 from Methanopyrus kandleri (strain AV19 / DSM 6324 / JCM 9639 / NBRC 100938).